Consider the following 412-residue polypeptide: Serine hydroxymethyltransferase (412 aa).

Residues Leu-117 and 121–123 each bind (6S)-5,6,7,8-tetrahydrofolate; that span reads GHL. Lys-226 bears the N6-(pyridoxal phosphate)lysine mark. 349–351 contributes to the (6S)-5,6,7,8-tetrahydrofolate binding site; that stretch reads SPF.

This sequence belongs to the SHMT family. In terms of assembly, homodimer. Requires pyridoxal 5'-phosphate as cofactor.

It is found in the cytoplasm. It catalyses the reaction (6R)-5,10-methylene-5,6,7,8-tetrahydrofolate + glycine + H2O = (6S)-5,6,7,8-tetrahydrofolate + L-serine. It participates in one-carbon metabolism; tetrahydrofolate interconversion. Its pathway is amino-acid biosynthesis; glycine biosynthesis; glycine from L-serine: step 1/1. In terms of biological role, catalyzes the reversible interconversion of serine and glycine with tetrahydrofolate (THF) serving as the one-carbon carrier. This reaction serves as the major source of one-carbon groups required for the biosynthesis of purines, thymidylate, methionine, and other important biomolecules. Also exhibits THF-independent aldolase activity toward beta-hydroxyamino acids, producing glycine and aldehydes, via a retro-aldol mechanism. The protein is Serine hydroxymethyltransferase of Halothermothrix orenii (strain H 168 / OCM 544 / DSM 9562).